A 247-amino-acid chain; its full sequence is Protein IRON-RELATED TRANSCRIPTION FACTOR 2 (247 aa).

The short motif at 68 to 75 is the Nuclear localization signal element; it reads HRKLSHNA. A basic motif region spans residues 68–81; that stretch reads HRKLSHNAYERDRR. One can recognise a bHLH domain in the interval 68 to 119; it reads HRKLSHNAYERDRRKQLNELYSSLRALLPDADHTKLSIPTTVSRVLKYIPEL. Positions 82 to 119 are helix-loop-helix motif; it reads KQLNELYSSLRALLPDADHTKLSIPTTVSRVLKYIPEL.

Belongs to the bHLH protein family. As to quaternary structure, forms homodimers. Interacts with BHLH156 in the nucleus. Expressed constitutively at low levels in the roots. Also observed in flowers, developing seeds, embryos and vascular bundles.

It is found in the nucleus. The protein localises to the cytoplasm. Transcription activator that binds to the DNA motif 5'-CACGTGG-3' in the promoter of iron (Fe) deficiency-inducible genes as well as of genes involved in iron homeostasis, thus contributing to basal tolerance to iron deficiency, iron uptake from soil and iron transport, particularly during seed maturation and germination. Promotes the accumulation of mugineic acid family phytosiderophores (MAs). Required for ethylene-mediated signaling during iron deficiency responses. Improves growth and yield, especially in calcareous soil with low iron availability. Promotes iron concentration in shoots and grain. This is Protein IRON-RELATED TRANSCRIPTION FACTOR 2 from Oryza sativa subsp. japonica (Rice).